Consider the following 340-residue polypeptide: COP9 signalosome complex subunit 5 (340 aa).

In terms of domain architecture, MPN spans 52–189 (VRISATALIK…IGAFRTYPAD (138 aa)). 3 residues coordinate Zn(2+): His135, His137, and Asp148. The JAMM motif motif lies at 135 to 148 (HSHPGYGCWLSGID).

It belongs to the peptidase M67A family. CSN5 subfamily. Component of the COP9 signalosome (CSN) complex.

The protein resides in the cytoplasm. The protein localises to the nucleus. In terms of biological role, catalytic Component of the COP9 signalosome (CSN) complex that acts as an regulator of the ubiquitin (Ubl) conjugation pathway by mediating the deneddylation of the cullin subunit of SCF-type E3 ubiquitin-protein ligase complexes. This is COP9 signalosome complex subunit 5 (RRI1) from Gibberella zeae (strain ATCC MYA-4620 / CBS 123657 / FGSC 9075 / NRRL 31084 / PH-1) (Wheat head blight fungus).